The sequence spans 145 residues: 3-hydroxyacyl-[acyl-carrier-protein] dehydratase FabZ (145 aa).

His-49 is a catalytic residue.

The protein belongs to the thioester dehydratase family. FabZ subfamily.

The protein localises to the cytoplasm. The catalysed reaction is a (3R)-hydroxyacyl-[ACP] = a (2E)-enoyl-[ACP] + H2O. Functionally, involved in unsaturated fatty acids biosynthesis. Catalyzes the dehydration of short chain beta-hydroxyacyl-ACPs and long chain saturated and unsaturated beta-hydroxyacyl-ACPs. This is 3-hydroxyacyl-[acyl-carrier-protein] dehydratase FabZ from Rickettsia conorii (strain ATCC VR-613 / Malish 7).